A 360-amino-acid chain; its full sequence is Homeobox-leucine zipper protein HOX21 (360 aa).

Disordered regions lie at residues 25–75 (QQAA…SSAQ) and 88–126 (MLGK…EKKR). Basic residues predominate over residues 36–55 (HHHHHHHGHHHEQQQHHHHL). Over residues 56–68 (GPPPPPPPHPHNP) the composition is skewed to pro residues. The span at 97–109 (GDGGGGGDEVNGG) shows a compositional bias: gly residues. The segment at residues 121 to 180 (AGEKKRRLNVEQVRTLEKNFELGNKLEPERKMQLARALGLQPRQVAIWFQNRRARWKTKQ) is a DNA-binding region (homeobox). A leucine-zipper region spans residues 179–223 (KQLEKDYDALKRQLDAVKAENDALLNHNKKLQAEIVALKGREAAS). Disordered regions lie at residues 233–278 (EASC…GGGG) and 299–328 (GVDI…GNVQ). The segment covering 234–246 (ASCSNRSENSSEI) has biased composition (polar residues).

Belongs to the HD-ZIP homeobox family. Class I subfamily. Expressed in seedlings, roots, stems, leaf blades and panicles.

It localises to the nucleus. Its function is as follows. Probable transcription factor. This chain is Homeobox-leucine zipper protein HOX21 (HOX21), found in Oryza sativa subsp. indica (Rice).